The chain runs to 202 residues: uncharacterized protein (202 aa).

A helical transmembrane segment spans residues 10-30 (TAAIFLLCCTSVIILFTIAVV).

The protein belongs to the bacterial sugar transferase family.

The protein resides in the cell membrane. Its function is as follows. May be involved in the production of the exopolysaccharide (EPS) component of the extracellular matrix during biofilm formation. EPS is responsible for the adhesion of chains of cells into bundles. This is an uncharacterized protein from Bacillus subtilis (strain 168).